The sequence spans 780 residues: MLHSVNSNNNNNIIKLNIGGFKYITTRETLILNSSFFNGLLNSDCGTVIDSKGYYFIDRDGELFSPILSFMRTGTFTLPYRMSLNNVYREVDFYGVDRLSALIQHKINISNITSVAGGIYFISKLPLTSNNNNIIINNSNNNNRKILHAVIKANIMALYFNDGYLEIWMQGMSFQWVKILTHLCFSNEYHIKELTARILKNDLNETTSFSLAARTSTERKVLIWFIDLDYHHMKVKIKERDITINHDIDYFHFLISNSFLACISMYGLITIVDLADQINLVSNNNQINQNNQINQNNQNNQNNQNNQNNNFKVIILEDRVSGIANSNESSLFIACSNSKVYELKQNIKRNWEWSIDEIYKLYDPEFFHNTFGFSLTNNNNNITNNNTNINNNNNPNSIYGNENNNNNNNQQNIINEIINKRRIRNNNNCSPLVTCLNSSIITNGGRLKSVLVLGTDDGVVHFLYKSVRDNMDRFYFASTYTLCNEGDDPISKVLISGGEEGVFINAISTSGISKSWHFIFNKQQQRVTGNSVYTGSSTKCIGCISLSSISNSNNLFNNNDNNDDNSFSINDIINNNNNYFNIFKFKNQKDLHFTSNSNNQKENNQYNLDGNFKFSSYNQIKVVIDQSNNLLVFAGSHRNAICALDYELPSTPILIIPLMDKTKVQRILISTFGGCEPTIHDQSFQLLTFHQSNQIYSWSLKEINHYFISTTETILNNDNFLNNINNINNNNNNNNINNNNNTIVKKRSGSSPLISALNNSILNSNNNNNNDNNPINNYDH.

One can recognise a BTB domain in the interval 10-80 (NNNIIKLNIG…MRTGTFTLPY (71 aa)).

This is an uncharacterized protein from Dictyostelium discoideum (Social amoeba).